A 308-amino-acid chain; its full sequence is MKKKFIALFSVLLLTSSLFLSSCSLPGLGGSSKDTIRIGAMATTESQIVSNILKELIEHDTGLKVEIVNNLGSTIVQHQAMLNGDVDITATRYTGTDLVGPLGEEAIKDPEKALAAVKKGFEERFHQTWFDSYGFANTYVFMVRQDTAKKYNLNTVSDMRKVENELTAGVDNSWMEREGDGYKAFSKAYDIEFKKIFPMQIGLIYTALKNNQMDVALGYSTDGRIPTYNLKLLKDDKKFFPPYDASALATDEILKKHPELKTTINKLKGKISTEEMQKLNYEADGKLKEPSIVAQEFLQKNNYFEGKN.

A signal peptide spans 1 to 22 (MKKKFIALFSVLLLTSSLFLSS). C23 carries N-palmitoyl cysteine lipidation. C23 is lipidated: S-diacylglycerol cysteine.

Belongs to the OsmX family. In terms of assembly, the complex is composed of two ATP-binding proteins (OpuCA), two transmembrane proteins (OpuCB and OpuCD) and a solute-binding protein (OpuCC).

The protein localises to the cell membrane. Part of the ABC transporter complex OpuCABCD involved in carnitine uptake. Involved, with BetL and GbuABC, in osmoprotection and cryoprotection of Listeria. Can also mediate weak glycine betaine transport. The protein is Carnitine transport binding protein OpuCC (opuCC) of Listeria monocytogenes serotype 1/2a (strain 10403S).